A 274-amino-acid chain; its full sequence is 2,3,4,5-tetrahydropyridine-2,6-dicarboxylate N-succinyltransferase (274 aa).

Substrate-binding residues include Arg104 and Asp141.

The protein belongs to the transferase hexapeptide repeat family. In terms of assembly, homotrimer.

The protein resides in the cytoplasm. The catalysed reaction is (S)-2,3,4,5-tetrahydrodipicolinate + succinyl-CoA + H2O = (S)-2-succinylamino-6-oxoheptanedioate + CoA. Its pathway is amino-acid biosynthesis; L-lysine biosynthesis via DAP pathway; LL-2,6-diaminopimelate from (S)-tetrahydrodipicolinate (succinylase route): step 1/3. This chain is 2,3,4,5-tetrahydropyridine-2,6-dicarboxylate N-succinyltransferase, found in Wigglesworthia glossinidia brevipalpis.